The primary structure comprises 296 residues: Light-independent protochlorophyllide reductase iron-sulfur ATP-binding protein (296 aa).

ATP is bound by residues 10–15 and Lys39; that span reads GIGKST. Residue Ser14 participates in Mg(2+) binding. 2 residues coordinate [4Fe-4S] cluster: Cys95 and Cys129. Residue 180 to 181 participates in ATP binding; sequence NR.

It belongs to the NifH/BchL/ChlL family. In terms of assembly, homodimer. Protochlorophyllide reductase is composed of three subunits; ChlL, ChlN and ChlB. The cofactor is [4Fe-4S] cluster.

Its subcellular location is the plastid. It localises to the chloroplast. It carries out the reaction chlorophyllide a + oxidized 2[4Fe-4S]-[ferredoxin] + 2 ADP + 2 phosphate = protochlorophyllide a + reduced 2[4Fe-4S]-[ferredoxin] + 2 ATP + 2 H2O. It functions in the pathway porphyrin-containing compound metabolism; chlorophyll biosynthesis (light-independent). Its function is as follows. Component of the dark-operative protochlorophyllide reductase (DPOR) that uses Mg-ATP and reduced ferredoxin to reduce ring D of protochlorophyllide (Pchlide) to form chlorophyllide a (Chlide). This reaction is light-independent. The L component serves as a unique electron donor to the NB-component of the complex, and binds Mg-ATP. This Chlorokybus atmophyticus (Soil alga) protein is Light-independent protochlorophyllide reductase iron-sulfur ATP-binding protein.